Consider the following 224-residue polypeptide: Holliday junction branch migration complex subunit RuvA (224 aa).

Residues 1-67 (MISWLKGEKV…EDGTSLYGFI (67 aa)) form a domain I region. The segment at 68–146 (EVNQRDLFRE…RFTDNDKTIH (79 aa)) is domain II. Residues 147–157 (ENKNDIEANQF) form a flexible linker region. Residues 157-224 (FSKYIDEIYL…ILMKLSEKST (68 aa)) form a domain III region.

This sequence belongs to the RuvA family. Homotetramer. Forms an RuvA(8)-RuvB(12)-Holliday junction (HJ) complex. HJ DNA is sandwiched between 2 RuvA tetramers; dsDNA enters through RuvA and exits via RuvB. An RuvB hexamer assembles on each DNA strand where it exits the tetramer. Each RuvB hexamer is contacted by two RuvA subunits (via domain III) on 2 adjacent RuvB subunits; this complex drives branch migration. In the full resolvosome a probable DNA-RuvA(4)-RuvB(12)-RuvC(2) complex forms which resolves the HJ.

It is found in the cytoplasm. Its function is as follows. The RuvA-RuvB-RuvC complex processes Holliday junction (HJ) DNA during genetic recombination and DNA repair, while the RuvA-RuvB complex plays an important role in the rescue of blocked DNA replication forks via replication fork reversal (RFR). RuvA specifically binds to HJ cruciform DNA, conferring on it an open structure. The RuvB hexamer acts as an ATP-dependent pump, pulling dsDNA into and through the RuvAB complex. HJ branch migration allows RuvC to scan DNA until it finds its consensus sequence, where it cleaves and resolves the cruciform DNA. This is Holliday junction branch migration complex subunit RuvA from Prochlorococcus marinus (strain NATL2A).